The primary structure comprises 512 residues: Serine/threonine-protein kinase BSK1 (512 aa).

Residue glycine 2 is the site of N-myristoyl glycine attachment. A disordered region spans residues 8–48 (FSGDNPLGKDGVQPQPLSQNNHGGATTADNGGSGGASGVGG). Over residues 38 to 48 (GGSGGASGVGG) the composition is skewed to gly residues. A Protein kinase domain is found at 76–331 (DNIVSESGEK…DLVATLAPLQ (256 aa)). ATP is bound by residues 82–90 (SGEKAPNLV) and lysine 104. Aspartate 198 functions as the Proton acceptor in the catalytic mechanism. The residue at position 230 (serine 230) is a Phosphoserine. Positions 483-508 (AKLNMNTDAADMLNEAAQLEEKRQRG) form a coiled coil.

It belongs to the protein kinase superfamily. Ser/Thr protein kinase family. As to quaternary structure, interacts with BRI1. Interacts with ASK7/BIN2, BSK5, BSK6, BSK8 and BSK11. Interacts with FLS2. In terms of processing, phosphorylated at Ser-230 by BRI1 upon brassinolide (BL) treatment. Phosphorylation at Ser-230 weakens the interaction between BSK1 and BRI1. Phosphorylated by ASK7/BIN2 and ASK9/BIL2.

The protein localises to the cell membrane. It carries out the reaction L-seryl-[protein] + ATP = O-phospho-L-seryl-[protein] + ADP + H(+). It catalyses the reaction L-threonyl-[protein] + ATP = O-phospho-L-threonyl-[protein] + ADP + H(+). Functionally, serine/threonine kinase that acts as a positive regulator of brassinosteroid (BR) signaling downstream of the receptor kinase BRI1. Mediates signal transduction from BRI1 by functioning as substrate of BRI1. Functions as a positive regulator of plant immunity. May be involved in the regulation of pattern-triggered immunity (PTI) downstream of the flagellin receptor FLS2. Possesses kinase activity in vitro. Kinase activity is required for its function in innate immunity. This chain is Serine/threonine-protein kinase BSK1, found in Arabidopsis thaliana (Mouse-ear cress).